Reading from the N-terminus, the 146-residue chain is Anti-sigma F factor (146 aa).

This sequence belongs to the anti-sigma-factor family.

It carries out the reaction L-seryl-[protein] + ATP = O-phospho-L-seryl-[protein] + ADP + H(+). The catalysed reaction is L-threonyl-[protein] + ATP = O-phospho-L-threonyl-[protein] + ADP + H(+). Its function is as follows. Binds to sigma F and blocks its ability to form an RNA polymerase holoenzyme (E-sigma F). Phosphorylates SpoIIAA on a serine residue. This phosphorylation may enable SpoIIAA to act as an anti-anti-sigma factor that counteracts SpoIIAB and thus releases sigma F from inhibition. This chain is Anti-sigma F factor, found in Bacillus cereus (strain ATCC 14579 / DSM 31 / CCUG 7414 / JCM 2152 / NBRC 15305 / NCIMB 9373 / NCTC 2599 / NRRL B-3711).